The primary structure comprises 319 residues: MKPENKLPVLDLISAEMKTVVNTLQPDLPSWPATGTIAEQRQYYTLERRFWNAGAPEMATRAYMVPTKYGQVETRLFCPQPDSPATLFYLHGGGFILGNLDTHDRIMRLLASYSQCTVIGINYTLSPEARFPQAIEEIVAACCYFHQQAEDYQINMSRIGFAGDSAGAMLALASALWLRDKQIDCGKIAGVLLWYGLYGLRDSVTRRLLGGAWDGLTQQDLQMYEEAYLSNDADRESPYYCLFNNDLTREVPPCFIAGAEFDPLLDDSRLLYQTLAAHQQPCEFKLYPGTLHAFLHYSRMMKTADEALRDGAQFFTAQL.

Positions H91 to G93 match the Involved in the stabilization of the negatively charged intermediate by the formation of the oxyanion hole motif. Catalysis depends on residues S165, D262, and H292.

This sequence belongs to the 'GDXG' lipolytic enzyme family. In terms of assembly, homodimer. Interacts with MalT and MelA.

The protein localises to the cytoplasm. Displays esterase activity towards short chain fatty esters (acyl chain length of up to 8 carbons). Able to hydrolyze triacetylglycerol (triacetin) and tributyrylglycerol (tributyrin), but not trioleylglycerol (triolein) or cholesterol oleate. Negatively regulates MalT activity by antagonizing maltotriose binding. Inhibits MelA galactosidase activity. This is Acetyl esterase from Shigella flexneri serotype 5b (strain 8401).